The sequence spans 598 residues: MSQTGAPPRWRNCPRRGQPVAGKFLPMKTMLGPRYDDKVPEENRFHPSMLSNYLKSLKVKMGLLVDLTNTTRFYDRADIEKEGIKYVKLSCKGHGECPTAETTEMFIRLCEHFIEKTPTELIGVHCTHGFNRTGFLICAYLVEKMDWSIEAAVAAFAQARPPGIYKGDYLKELFRRYGDVEDAPAAPPLPEWCFDEDEEEDGEEDGSASAPASEPSSSHTGQSKKKKERLKLGAVFLEGVSVKGVSQVTTQPKLGEIQRKCQQFSEWDRSGFPGAQPVSMDRKNIRMLEQNGYKVSWKADGTRYMMLIDGRNEVYMIDRDNSVFHIENLEFPFRKDLRIHLSNTLLDGEMIIDKVNGQPVPRYLIYDIIKFSGQPVGQCDFNRRLLCIEKEIISPRFEKMKLGQIDKAKEPFSVRNKPFFDIHAARKLLEGSFTSQVSHEVDGLIFQPIGKYKPGRCDDILKWKPPSHNSVDFRLKITKVGGEGLIPQTVGLLYVGNYDMPFAQMKITKDLKQYDNKIIECTFVNNTWVFMRQRVDKSFPNAYDTAMAVCNSIQHPVTKEILLEFLERCAQVQSRKNPADSDLMPPPPPKRSANSIPQ.

A TPase region spans residues 1-215 (MSQTGAPPRW…GSASAPASEP (215 aa)). The region spanning 25–183 (LPMKTMLGPR…FRRYGDVEDA (159 aa)) is the Tyrosine-protein phosphatase domain. The active-site Phosphocysteine intermediate is the Cys126. The segment at 186–227 (APPLPEWCFDEDEEEDGEEDGSASAPASEPSSSHTGQSKKKK) is disordered. Residues 193–206 (CFDEDEEEDGEEDG) are compositionally biased toward acidic residues. The span at 207 to 218 (SASAPASEPSSS) shows a compositional bias: low complexity. Residues 233–598 (GAVFLEGVSV…PKRSANSIPQ (366 aa)) form a GTase region. The active-site N6-GMP-lysine intermediate is Lys298. GTP is bound by residues Arg303, Arg319, 347-349 (DGE), 462-464 (KWK), and 532-537 (RQRVDK). A disordered region spans residues 575–598 (RKNPADSDLMPPPPPKRSANSIPQ).

The protein in the N-terminal section; belongs to the non-receptor class of the protein-tyrosine phosphatase family. In the C-terminal section; belongs to the eukaryotic GTase family.

Its subcellular location is the nucleus. The catalysed reaction is a 5'-end triphospho-ribonucleoside in mRNA + H2O = a 5'-end diphospho-ribonucleoside in mRNA + phosphate + H(+). The enzyme catalyses a 5'-end diphospho-ribonucleoside in mRNA + GTP + H(+) = a 5'-end (5'-triphosphoguanosine)-ribonucleoside in mRNA + diphosphate. Functionally, bifunctional mRNA-capping enzyme exhibiting RNA 5'-triphosphate monophosphatase activity in the N-terminal part and mRNA guanylyltransferase activity in the C-terminal part. Catalyzes the first two steps of cap formation: by removing the gamma-phosphate from the 5'-triphosphate end of nascent mRNA to yield a diphosphate end, and by transferring the GMP moiety of GTP to the 5'-diphosphate terminus of RNA via a covalent enzyme-GMP reaction intermediate. This is mRNA-capping enzyme (rngtt) from Danio rerio (Zebrafish).